A 213-amino-acid polypeptide reads, in one-letter code: ATP-dependent Clp protease proteolytic subunit (213 aa).

The active-site Nucleophile is the Ser114. His139 is a catalytic residue.

Belongs to the peptidase S14 family. Fourteen ClpP subunits assemble into 2 heptameric rings which stack back to back to give a disk-like structure with a central cavity, resembling the structure of eukaryotic proteasomes.

Its subcellular location is the cytoplasm. The enzyme catalyses Hydrolysis of proteins to small peptides in the presence of ATP and magnesium. alpha-casein is the usual test substrate. In the absence of ATP, only oligopeptides shorter than five residues are hydrolyzed (such as succinyl-Leu-Tyr-|-NHMec, and Leu-Tyr-Leu-|-Tyr-Trp, in which cleavage of the -Tyr-|-Leu- and -Tyr-|-Trp bonds also occurs).. In terms of biological role, cleaves peptides in various proteins in a process that requires ATP hydrolysis. Has a chymotrypsin-like activity. Plays a major role in the degradation of misfolded proteins. This Pseudomonas putida (strain GB-1) protein is ATP-dependent Clp protease proteolytic subunit.